Consider the following 120-residue polypeptide: Putative pterin-4-alpha-carbinolamine dehydratase (120 aa).

This sequence belongs to the pterin-4-alpha-carbinolamine dehydratase family.

It catalyses the reaction (4aS,6R)-4a-hydroxy-L-erythro-5,6,7,8-tetrahydrobiopterin = (6R)-L-erythro-6,7-dihydrobiopterin + H2O. This chain is Putative pterin-4-alpha-carbinolamine dehydratase, found in Saccharomyces cerevisiae (strain ATCC 204508 / S288c) (Baker's yeast).